The sequence spans 223 residues: Endonuclease NucS (223 aa).

The protein belongs to the NucS endonuclease family.

The protein resides in the cytoplasm. In terms of biological role, cleaves both 3' and 5' ssDNA extremities of branched DNA structures. This is Endonuclease NucS from Streptomyces avermitilis (strain ATCC 31267 / DSM 46492 / JCM 5070 / NBRC 14893 / NCIMB 12804 / NRRL 8165 / MA-4680).